Consider the following 443-residue polypeptide: Tol-Pal system protein TolB (443 aa).

The N-terminal stretch at 1–33 (MKIGIINTKIRTVFSAFACMIAASLVCTMPARA) is a signal peptide.

The protein belongs to the TolB family. The Tol-Pal system is composed of five core proteins: the inner membrane proteins TolA, TolQ and TolR, the periplasmic protein TolB and the outer membrane protein Pal. They form a network linking the inner and outer membranes and the peptidoglycan layer.

It is found in the periplasm. Functionally, part of the Tol-Pal system, which plays a role in outer membrane invagination during cell division and is important for maintaining outer membrane integrity. In Brucella anthropi (strain ATCC 49188 / DSM 6882 / CCUG 24695 / JCM 21032 / LMG 3331 / NBRC 15819 / NCTC 12168 / Alc 37) (Ochrobactrum anthropi), this protein is Tol-Pal system protein TolB.